The sequence spans 214 residues: Ribonuclease HII (214 aa).

The RNase H type-2 domain maps to 26-214 (EIVCGVDEAG…PVRAALDLIR (189 aa)). The a divalent metal cation site is built by Asp32, Glu33, and Asp124.

This sequence belongs to the RNase HII family. Mn(2+) serves as cofactor. Requires Mg(2+) as cofactor.

The protein localises to the cytoplasm. The catalysed reaction is Endonucleolytic cleavage to 5'-phosphomonoester.. Its function is as follows. Endonuclease that specifically degrades the RNA of RNA-DNA hybrids. This is Ribonuclease HII from Burkholderia lata (strain ATCC 17760 / DSM 23089 / LMG 22485 / NCIMB 9086 / R18194 / 383).